An 84-amino-acid polypeptide reads, in one-letter code: Beta-toxin Tf1a (84 aa).

Positions 1 to 20 (MKGMILFISCLLLIGIVVEC) are cleaved as a signal peptide. Residues 21 to 82 (KEGYLMDHEG…VWERATNRCG (62 aa)) form the LCN-type CS-alpha/beta domain. 4 cysteine pairs are disulfide-bonded: C31–C81, C35–C57, C43–C62, and C47–C64. At C81 the chain carries Cysteine amide.

The protein belongs to the long (4 C-C) scorpion toxin superfamily. Sodium channel inhibitor family. Beta subfamily. As to expression, expressed by the venom gland.

Its subcellular location is the secreted. Beta toxins bind voltage-independently at site-4 of sodium channels (Nav) and shift the voltage of activation toward more negative potentials thereby affecting sodium channel activation and promoting spontaneous and repetitive firing. The toxin induces a leftward shift, on all channels tested (including Blattella germanica and Varroa destructor Nav1), displacing a change in voltage dependence activation to more hyperpolarized potentials. In addition, the toxin mostly inhibits peak current of hNav1.4/SCN4A (53% inhibition of peak current at 100 nM) and hNav1.5/SCN5A (71% inhibition). The sequence is that of Beta-toxin Tf1a from Tityus fasciolatus (Central Brazilian scorpion).